A 226-amino-acid polypeptide reads, in one-letter code: Protein-L-isoaspartate(D-aspartate) O-methyltransferase (226 aa).

Residues 57–60 (VTIS), histidine 65, serine 89, 115–116 (EH), 147–148 (DG), and threonine 222 each bind S-adenosyl-L-homocysteine. Serine 60 is a catalytic residue.

Belongs to the methyltransferase superfamily. L-isoaspartyl/D-aspartyl protein methyltransferase family. As to quaternary structure, monomer.

The protein resides in the cytoplasm. The protein localises to the cytosol. It carries out the reaction [protein]-L-isoaspartate + S-adenosyl-L-methionine = [protein]-L-isoaspartate alpha-methyl ester + S-adenosyl-L-homocysteine. Its function is as follows. Initiates the repair of damaged proteins by catalyzing methyl esterification of L-isoaspartyl and D-aspartyl residues produced by spontaneous isomerization and racemization of L-aspartyl and L-asparaginyl residues in aging peptides and proteins. This chain is Protein-L-isoaspartate(D-aspartate) O-methyltransferase (Pcmt), found in Drosophila melanogaster (Fruit fly).